A 52-amino-acid polypeptide reads, in one-letter code: UPF0391 membrane protein XCV0245 (52 aa).

Helical transmembrane passes span 5 to 25 (AIIF…GIAG) and 27 to 47 (ATNI…ISMF).

Belongs to the UPF0391 family.

The protein resides in the cell membrane. The polypeptide is UPF0391 membrane protein XCV0245 (Xanthomonas euvesicatoria pv. vesicatoria (strain 85-10) (Xanthomonas campestris pv. vesicatoria)).